Here is a 114-residue protein sequence, read N- to C-terminus: U17-barytoxin-Tl1a (114 aa).

Residues 1–20 (MKTIIVFLSLLVLATKFGDA) form the signal peptide. Residues 21-74 (NEGVNQEQMKEVIQNEFREDFLNEMAPMSLLQQLEAIESTLLEKEADRNSRQKR) constitute a propeptide that is removed on maturation. Cystine bridges form between cysteine 75–cysteine 88, cysteine 82–cysteine 93, and cysteine 87–cysteine 108.

It belongs to the neurotoxin 14 (magi-1) family. 03 (ICK-30-40) subfamily. As to expression, expressed by the venom gland.

It localises to the secreted. Ion channel inhibitor. The protein is U17-barytoxin-Tl1a of Trittame loki (Brush-footed trapdoor spider).